The sequence spans 534 residues: Low affinity inorganic phosphate transporter 1 (534 aa).

Over 1–23 (MAKDLQVLTALDVAKTQLYHFTA) the chain is Cytoplasmic. Residues 24–44 (IVIAGMGFFTDAYDLFCISLV) traverse the membrane as a helical segment. Over 45-69 (TKLLGRIYYHHEGALKPGSLPPNVA) the chain is Extracellular. A helical transmembrane segment spans residues 70–90 (AAVNGVAFCGTLAGQLFFGWL). Residues 91–98 (GDKLGRKK) lie on the Cytoplasmic side of the membrane. Residues 99–119 (VYGMTLMLMVICSIASGLSFG) traverse the membrane as a helical segment. Over 120-124 (HTPKS) the chain is Extracellular. A helical membrane pass occupies residues 125–145 (VMATLCFFRFWLGFGIGGDYP). At 146-163 (LSATIMSEYANKKTRGAF) the chain is on the cytoplasmic side. The chain crosses the membrane as a helical span at residues 164-184 (IAAVFAMQGFGILAGGMVAII). The Extracellular portion of the chain corresponds to 185 to 210 (VSAAFKNQFPAPAYKDGALASTISQA). Residues 211-231 (DFVWRIIVMFGAIPTALTYYW) form a helical membrane-spanning segment. The Cytoplasmic segment spans residues 232–290 (RMKMPETARYTALVAKNLKQATNDMSKVLQVEIEPEQEKVEEISQGNDFGLFTKQFLRR). Residues 291–311 (HGLHLLGTASTWFLLDIAFYS) traverse the membrane as a helical segment. The Extracellular portion of the chain corresponds to 312-343 (QNLFQKDIFSAIGWIPPAETMNALEEVYRIAR). Residues 344–364 (AQTLIALCSTVPGYWFTVAFI) form a helical membrane-spanning segment. Residues 365–369 (DKIGR) lie on the Cytoplasmic side of the membrane. The chain crosses the membrane as a helical span at residues 370–390 (FAIQLMGFFFMTVFMFALAIP). Topologically, residues 391 to 400 (YTHWTHKDNR) are extracellular. Residues 401–421 (IGFVIMYSLTFFFANFGPNAT) form a helical membrane-spanning segment. At 422 to 440 (TFVVPAEIFPARLRSTCHG) the chain is on the cytoplasmic side. The helical transmembrane segment at 441-461 (ISAAAGKAGAMVGAFGFLYAA) threads the bilayer. Residues 462–481 (QSTDPKKTDAGYPAGIGVRN) lie on the Extracellular side of the membrane. Residues 482–502 (SLIVLGCVNFLGMLFTLLVPE) form a helical membrane-spanning segment. Residues 503–534 (SKGKSLEEMSRENEGEDENGTEMRASGRTVPV) lie on the Cytoplasmic side of the membrane. The segment at 507-534 (SLEEMSRENEGEDENGTEMRASGRTVPV) is disordered.

This sequence belongs to the major facilitator superfamily. Phosphate:H(+) symporter (TC 2.A.1.9) family.

It localises to the cell membrane. The enzyme catalyses phosphate(in) + H(+)(in) = phosphate(out) + H(+)(out). Low-affinity transporter for external inorganic phosphate (Pi). Involved in phosphorus (P) remobilization from dying to developing tissues during corolla senescence in an ethylene-dependent manner. This Petunia hybrida (Petunia) protein is Low affinity inorganic phosphate transporter 1.